The primary structure comprises 86 residues: Exodeoxyribonuclease 7 small subunit (86 aa).

Belongs to the XseB family. Heterooligomer composed of large and small subunits.

It is found in the cytoplasm. It carries out the reaction Exonucleolytic cleavage in either 5'- to 3'- or 3'- to 5'-direction to yield nucleoside 5'-phosphates.. Bidirectionally degrades single-stranded DNA into large acid-insoluble oligonucleotides, which are then degraded further into small acid-soluble oligonucleotides. The polypeptide is Exodeoxyribonuclease 7 small subunit (Bacillus licheniformis (strain ATCC 14580 / DSM 13 / JCM 2505 / CCUG 7422 / NBRC 12200 / NCIMB 9375 / NCTC 10341 / NRRL NRS-1264 / Gibson 46)).